The sequence spans 396 residues: Mannonate dehydratase (396 aa).

The protein belongs to the mannonate dehydratase family. It depends on Fe(2+) as a cofactor. Mn(2+) serves as cofactor.

It catalyses the reaction D-mannonate = 2-dehydro-3-deoxy-D-gluconate + H2O. Its pathway is carbohydrate metabolism; pentose and glucuronate interconversion. Its function is as follows. Catalyzes the dehydration of D-mannonate. This is Mannonate dehydratase from Serratia proteamaculans (strain 568).